We begin with the raw amino-acid sequence, 172 residues long: Allergen Bos d 2 (172 aa).

Positions 1 to 16 (MKAVFLTLLFGLVCTA) are cleaved as a signal peptide. Pyrrolidone carboxylic acid is present on glutamine 17. Intrachain disulfides connect cysteine 60–cysteine 64 and cysteine 79–cysteine 170.

The protein belongs to the calycin superfamily. Lipocalin family. In terms of tissue distribution, found exclusively in skin. Produced in sweat glands and transported to the skin surface.

Its subcellular location is the secreted. In terms of biological role, probable pheromone carrier. This Bos taurus (Bovine) protein is Allergen Bos d 2.